Here is a 322-residue protein sequence, read N- to C-terminus: CXXC-type zinc finger protein 5 (322 aa).

The span at 1 to 10 shows a compositional bias: gly residues; that stretch reads MSSLGGGSQD. Residues 1-100 are disordered; that stretch reads MSSLGGGSQD…SGGGSMMGGE (100 aa). Low complexity-rich tracts occupy residues 11–20 and 28–52; these read AGGSSSSSTN and SGPKAGAADKSAVVAAATPASVADD. Thr53 is modified (phosphothreonine). The segment covering 87–97 has biased composition (gly residues); it reads SSGGSGGGSMM. The segment at 256–297 adopts a CXXC-type zinc-finger fold; sequence GKKKRKRCGMCAPCRRRINCEQCSSCRNRKTGHQICKFRKCE. The Nuclear localization signal signature appears at 257–262; that stretch reads KKKRKR. Residues Cys263, Cys266, Cys269, Cys275, Cys278, Cys281, Cys291, and Cys296 each coordinate Zn(2+).

As to quaternary structure, interacts with DVL1. Interacts with RBPJ.

The protein localises to the nucleus. Its subcellular location is the cytoplasm. May indirectly participate in activation of the NF-kappa-B and MAPK pathways. Acts as a mediator of BMP4-mediated modulation of canonical Wnt signaling activity in neural stem cells. Required for DNA damage-induced ATM phosphorylation, p53 activation and cell cycle arrest. Involved in myelopoiesis. Binds to the oxygen responsive element of COX4I2 and represses its transcription under hypoxia conditions (4% oxygen), as well as normoxia conditions (20% oxygen). May repress COX4I2 transactivation induced by CHCHD2 and RBPJ. Binds preferentially to DNA containing cytidine-phosphate-guanosine (CpG) dinucleotides over CpH (H=A, T, and C), hemimethylated-CpG and hemimethylated-hydroxymethyl-CpG. The chain is CXXC-type zinc finger protein 5 (CXXC5) from Pongo abelii (Sumatran orangutan).